The primary structure comprises 142 residues: Large ribosomal subunit protein uL11 (142 aa).

The protein belongs to the universal ribosomal protein uL11 family. Part of the ribosomal stalk of the 50S ribosomal subunit. Interacts with L10 and the large rRNA to form the base of the stalk. L10 forms an elongated spine to which L12 dimers bind in a sequential fashion forming a multimeric L10(L12)X complex. Post-translationally, one or more lysine residues are methylated.

Forms part of the ribosomal stalk which helps the ribosome interact with GTP-bound translation factors. The polypeptide is Large ribosomal subunit protein uL11 (Shewanella piezotolerans (strain WP3 / JCM 13877)).